The sequence spans 197 residues: Recombination protein RecR (197 aa).

Residues 56–71 (CSVCGNFDTIDPCAIC) form a C4-type zinc finger. Positions 79-174 (SMLCVVEDVA…TVSGLAHGVP (96 aa)) constitute a Toprim domain.

It belongs to the RecR family.

Functionally, may play a role in DNA repair. It seems to be involved in an RecBC-independent recombinational process of DNA repair. It may act with RecF and RecO. This is Recombination protein RecR from Paramagnetospirillum magneticum (strain ATCC 700264 / AMB-1) (Magnetospirillum magneticum).